The primary structure comprises 46 residues: Osteocalcin 2 (46 aa).

One can recognise a Gla domain in the interval 1–43; that stretch reads AVPAGTLSPLQMESLREVCEVNVACDEMADTAGIVAAYTXFYG. Residue T6 is modified to Phosphothreonine. The Ca(2+) site is built by E13, E17, E20, and D26. A 4-carboxyglutamate mark is found at E13, E17, and E20. Cysteines 19 and 25 form a disulfide. E27 carries the post-translational modification 4-carboxyglutamate.

This sequence belongs to the osteocalcin/matrix Gla protein family. In terms of processing, gamma-carboxyglutamate residues are formed by vitamin K dependent carboxylation by GGCX. These residues are essential for the binding of calcium.

It localises to the secreted. Its function is as follows. The carboxylated form is one of the main organic components of the bone matrix, which constitutes 1-2% of the total bone protein. The carboxylated form binds strongly to apatite and calcium. This is Osteocalcin 2 from Solea senegalensis (Senegalese sole).